The primary structure comprises 98 residues: NADH-ubiquinone oxidoreductase chain 4L (98 aa).

Helical transmembrane passes span 1-21, 26-46, and 61-81; these read MSLIHMNVMMAFSMSLVGLLM, LMSALLCLEGMALSLFIFTTL, and IILLVFTACEAAIGLALLVMI.

It belongs to the complex I subunit 4L family. Core subunit of respiratory chain NADH dehydrogenase (Complex I) which is composed of 45 different subunits.

The protein resides in the mitochondrion inner membrane. It carries out the reaction a ubiquinone + NADH + 5 H(+)(in) = a ubiquinol + NAD(+) + 4 H(+)(out). In terms of biological role, core subunit of the mitochondrial membrane respiratory chain NADH dehydrogenase (Complex I) which catalyzes electron transfer from NADH through the respiratory chain, using ubiquinone as an electron acceptor. Part of the enzyme membrane arm which is embedded in the lipid bilayer and involved in proton translocation. This chain is NADH-ubiquinone oxidoreductase chain 4L (MT-ND4L), found in Physeter macrocephalus (Sperm whale).